The primary structure comprises 375 residues: Period circadian protein (375 aa).

Disordered regions lie at residues 28–118 (TAPV…AVTP), 140–189 (KHRE…WEGE), and 220–254 (CQAS…NQYA). The span at 69 to 91 (SGNFTTGSNLHMSSVTNTSNAGT) shows a compositional bias: low complexity. A compositionally biased stretch (gly residues) spans 92 to 113 (GTSGTGNSGGGGGGGGGGGPGN). A compositionally biased stretch (basic and acidic residues) spans 145–156 (RGRSGEKNKKSA). The segment covering 224–243 (GAGGGGSGSVGGTGNIGSGG) has biased composition (gly residues). Residues 245-254 (NAQPSTNQYA) are compositionally biased toward polar residues.

As to quaternary structure, forms a heterodimer with timeless (TIM); the complex then translocates into the nucleus. Phosphorylated with a circadian rhythmicity, probably by the double-time protein (dbt). Phosphorylation could be implicated in the stability of per monomer and in the formation of heterodimer per-tim.

It is found in the nucleus. The protein localises to the cytoplasm. Its subcellular location is the perinuclear region. Its function is as follows. Essential for biological clock functions. Determines the period length of circadian and ultradian rhythms; an increase in PER dosage leads to shortened circadian rhythms and a decrease leads to lengthened circadian rhythms. Essential for the circadian rhythmicity of locomotor activity, eclosion behavior, and for the rhythmic component of the male courtship song that originates in the thoracic nervous system. The biological cycle depends on the rhythmic formation and nuclear localization of the TIM-PER complex. Light induces the degradation of TIM, which promotes elimination of PER. Nuclear activity of the heterodimer coordinatively regulates PER and TIM transcription through a negative feedback loop. Behaves as a negative element in circadian transcriptional loop. Does not appear to bind DNA, suggesting indirect transcriptional inhibition. This is Period circadian protein (per) from Drosophila capricorni (Fruit fly).